Consider the following 713-residue polypeptide: Nucleoporin NUP82 (713 aa).

The tract at residues 1 to 409 (MSQSSRLSAL…SDLNPLAGLK (409 aa)) is interaction with NUP116. An interaction with NSP1 and NUP159 region spans residues 463–713 (TSISTEKSDT…VSQEFTTKTQ (251 aa)). Residues 582 to 713 (EAQNKKWDAQ…VSQEFTTKTQ (132 aa)) are a coiled coil. Positions 607–623 (KKLSQIAESNKFKEKKI) match the Bipartite nuclear localization signal motif.

As to quaternary structure, component of the nuclear pore complex (NPC). NPC constitutes the exclusive means of nucleocytoplasmic transport. NPCs allow the passive diffusion of ions and small molecules and the active, nuclear transport receptor-mediated bidirectional transport of macromolecules such as proteins, RNAs, ribonucleoparticles (RNPs), and ribosomal subunits across the nuclear envelope. Due to its 8-fold rotational symmetry, all subunits are present with 8 copies or multiples thereof. NUP82 is part of the NUP82 subcomplex. This subcomplex is the base for interactions with NUP116 and GLE2, with NUP42 and GLE1 and with DYN2.

The protein localises to the nucleus. Its subcellular location is the nuclear pore complex. It localises to the nucleus membrane. Functionally, functions as a component of the nuclear pore complex (NPC). NPC components, collectively referred to as nucleoporins (NUPs), can play the role of both NPC structural components and of docking or interaction partners for transiently associated nuclear transport factors. It is specifically involved as part of the NUP82-NUP159-NSP1 subcomplex in nuclear mRNA and pre-ribosome export by acting as a linker tethering nucleoporins that are directly involved in nuclear transport to the NPC via its coiled-coil domain. This is Nucleoporin NUP82 (NUP82) from Saccharomyces cerevisiae (strain ATCC 204508 / S288c) (Baker's yeast).